The sequence spans 219 residues: UPF0502 protein Ppro_2903 (219 aa).

This sequence belongs to the UPF0502 family.

The polypeptide is UPF0502 protein Ppro_2903 (Pelobacter propionicus (strain DSM 2379 / NBRC 103807 / OttBd1)).